The chain runs to 137 residues: Protein CTLA-2-alpha (137 aa).

The first 27 residues, 1–27 (MMVSICEQKLQHFSAVFLLILCLGMMS), serve as a signal peptide directing secretion. 2 consecutive repeat copies span residues 39 to 41 (EWK) and 42 to 44 (EWK). The interval 39-44 (EWKEWK) is 2 X 3 AA tandem repeats of E-W-K. Residues 114–137 (APDLPEYEDLGKNSYLTPGRAQPE) are disordered.

The protein to the propeptide regions of cysteine proteases.

It localises to the secreted. Its function is as follows. Not known, expressed in activated T-cell. The protein is Protein CTLA-2-alpha (Ctla2a) of Mus musculus (Mouse).